The sequence spans 324 residues: Acetyl-coenzyme A carboxylase carboxyl transferase subunit alpha (324 aa).

Residues 44–298 (QLERRAEELR…KQTLIDTIDE (255 aa)) form the CoA carboxyltransferase C-terminal domain.

It belongs to the AccA family. In terms of assembly, acetyl-CoA carboxylase is a heterohexamer composed of biotin carboxyl carrier protein (AccB), biotin carboxylase (AccC) and two subunits each of ACCase subunit alpha (AccA) and ACCase subunit beta (AccD).

Its subcellular location is the cytoplasm. The catalysed reaction is N(6)-carboxybiotinyl-L-lysyl-[protein] + acetyl-CoA = N(6)-biotinyl-L-lysyl-[protein] + malonyl-CoA. It functions in the pathway lipid metabolism; malonyl-CoA biosynthesis; malonyl-CoA from acetyl-CoA: step 1/1. In terms of biological role, component of the acetyl coenzyme A carboxylase (ACC) complex. First, biotin carboxylase catalyzes the carboxylation of biotin on its carrier protein (BCCP) and then the CO(2) group is transferred by the carboxyltransferase to acetyl-CoA to form malonyl-CoA. The chain is Acetyl-coenzyme A carboxylase carboxyl transferase subunit alpha from Rippkaea orientalis (strain PCC 8801 / RF-1) (Cyanothece sp. (strain PCC 8801)).